The chain runs to 514 residues: Synaptic vesicular amine transporter (514 aa).

Over 1–20 the chain is Cytoplasmic; it reads MALSELALVRWLQESRRSRK. A helical transmembrane segment spans residues 21–41; sequence LILFIVFLALLLDNMLLTVVV. Topologically, residues 42-129 are lumenal, vesicle; that stretch reads PIIPSYLYSI…EDKDLLNENV (88 aa). N84 and N91 each carry an N-linked (GlcNAc...) asparagine glycan. The cysteines at positions 117 and 324 are disulfide-linked. Residues 130–150 form a helical membrane-spanning segment; the sequence is QVGLLFASKATVQLITNPFIG. Residues 151 to 159 lie on the Cytoplasmic side of the membrane; that stretch reads LLTNRIGYP. The chain crosses the membrane as a helical span at residues 160 to 180; sequence IPIFAGFCIMFVSTIMFAFSS. Residues 181-189 lie on the Lumenal, vesicle side of the membrane; that stretch reads SYAFLLIAR. A helical membrane pass occupies residues 190–210; the sequence is SLQGIGSSCSSVAGMGMLASV. Over 211–219 the chain is Cytoplasmic; sequence YTDDEERGN. The helical transmembrane segment at 220 to 242 threads the bilayer; it reads VMGIALGGLAMGVLVGPPFGSVL. The serotonin site is built by L228 and V232. The Lumenal, vesicle segment spans residues 243–248; it reads YEFVGK. Residues 249-271 form a helical membrane-spanning segment; that stretch reads TAPFLVLAALVLLDGAIQLFVLQ. Residues 272 to 291 lie on the Cytoplasmic side of the membrane; it reads PSRVQPESQKGTPLTTLLKD. The chain crosses the membrane as a helical span at residues 292–311; that stretch reads PYILIAAGSICFANMGIAML. Positions 305, 308, 312, 334, and 341 each coordinate serotonin. Topologically, residues 312–328 are lumenal, vesicle; it reads EPALPIWMMETMCSRKW. A helical membrane pass occupies residues 329 to 352; it reads QLGVAFLPASISYLIGTNIFGILA. Topologically, residues 353–357 are cytoplasmic; sequence HKMGR. Residues 358–378 traverse the membrane as a helical segment; the sequence is WLCALLGMIIVGVSILCIPFA. The Lumenal, vesicle portion of the chain corresponds to 379 to 389; sequence KNIYGLIAPNF. A helical transmembrane segment spans residues 390-410; sequence GVGFAIGMVDSSMMPIMGYLV. D399 provides a ligand contact to serotonin. The Cytoplasmic segment spans residues 411-414; the sequence is DLRH. Residues 415–435 form a helical membrane-spanning segment; that stretch reads VSVYGSVYAIADVAFCMGYAI. Y433 provides a ligand contact to serotonin. Residues 436–440 lie on the Lumenal, vesicle side of the membrane; the sequence is GPSAG. Residues 441-462 form a helical membrane-spanning segment; that stretch reads GAIAKAIGFPWLMTIIGIIDIL. Residues 463–514 lie on the Cytoplasmic side of the membrane; the sequence is FAPLCFFLRSPPAKEEKMAILMDHNCPIKTKMYTQNNIQSYPIGEDEESESD. Phosphoserine occurs at positions 511 and 513.

Belongs to the major facilitator superfamily. Vesicular transporter family. As to quaternary structure, interacts with SLC6A3. Expressed in neuronal and neuroendocrine tissues. Detected in central and peripheral nervous system in particular in axonal and dendritic processes in dopaminergic cells of substantia nigra, histaminergic neuronal cell bodies of substantia nigra and tuberomammillary nucleus, in ganglion cells of sympathetic glia and in peripheral sympathetic nerve terminals in stomach and duodenum (at protein level). Highly expressed in chromaffin cells of the adrenal medulla and histamine-storing enterochromaffin-like cells of oxyntic mucosa (at protein level).

The protein localises to the cytoplasmic vesicle. Its subcellular location is the secretory vesicle. It localises to the synaptic vesicle membrane. It is found in the secretory vesicle membrane. The protein resides in the cell projection. The protein localises to the axon. Its subcellular location is the dendrite. The enzyme catalyses serotonin(in) + 2 H(+)(out) = serotonin(out) + 2 H(+)(in). It catalyses the reaction dopamine(in) + 2 H(+)(out) = dopamine(out) + 2 H(+)(in). The catalysed reaction is histamine(in) + 2 H(+)(out) = histamine(out) + 2 H(+)(in). With respect to regulation, strongly inhibited by reserpine and tetrabenazine. Also inhibited to a lesser extent by ketanserin and fenfluramine. Reserpine and ketanserin inhibit by blocking the substrate-binding pocket. Tetrabenazine traps SLC18A2/VMAT2 in an occluded conformation and its inhibition is specific to SLC18A2/VMAT2 but not SLC18A1/VMAT1. Electrogenic antiporter that exchanges one cationic monoamine with two intravesicular protons across the membrane of secretory and synaptic vesicles. Uses the electrochemical proton gradient established by the V-type proton-pump ATPase to accumulate high concentrations of monoamines inside the vesicles prior to their release via exocytosis. Transports a variety of catecholamines such as dopamine, adrenaline and noradrenaline, histamine, and indolamines such as serotonin. Regulates the transvesicular monoaminergic gradient that determines the quantal size. Mediates somatodendritic dopamine release in hippocampal neurons, likely as part of a regulated secretory pathway that integrates retrograde synaptic signals. Acts as a primary transporter for striatal dopamine loading ensuring impulse-dependent release of dopamine at the synaptic cleft. Responsible for histamine and serotonin storage and subsequent corelease from mast cell granules. The polypeptide is Synaptic vesicular amine transporter (SLC18A2) (Homo sapiens (Human)).